The sequence spans 793 residues: Phenylalanine--tRNA ligase beta subunit (793 aa).

A tRNA-binding domain is found at 39-148; it reads AAPFKGVKAA…EGDFPGVDLH (110 aa). A B5 domain is found at 401-476; the sequence is PPQATIILRK…RLYGYDRLPS (76 aa). Mg(2+) contacts are provided by Asp454, Asp460, Glu463, and Glu464. The FDX-ACB domain maps to 699–792; that stretch reads SKFPAIRRDI…LVTELGAIIR (94 aa).

Belongs to the phenylalanyl-tRNA synthetase beta subunit family. Type 1 subfamily. As to quaternary structure, tetramer of two alpha and two beta subunits. Mg(2+) is required as a cofactor.

It localises to the cytoplasm. The enzyme catalyses tRNA(Phe) + L-phenylalanine + ATP = L-phenylalanyl-tRNA(Phe) + AMP + diphosphate + H(+). The chain is Phenylalanine--tRNA ligase beta subunit from Nitrosococcus oceani (strain ATCC 19707 / BCRC 17464 / JCM 30415 / NCIMB 11848 / C-107).